We begin with the raw amino-acid sequence, 336 residues long: Terephthalate 1,2-dioxygenase, reductase component 1 (336 aa).

The 2Fe-2S ferredoxin-type domain occupies 3 to 91; that stretch reads HQIHIHDSDI…DIRIQPSSFR (89 aa). Residues Cys-37, Cys-42, Cys-45, and Cys-75 each contribute to the [2Fe-2S] cluster site. The 100-residue stretch at 98-197 folds into the FAD-binding FR-type domain; the sequence is RKRFTAKVYS…ELPFGSIALK (100 aa).

Monomer. Part of a multicomponent enzyme system composed of a reductase (TphA1I or TphA1II) and a two-subunit oxygenase component (TphA2I or TphA2II and TphA3I or TphA3II). FAD is required as a cofactor. The cofactor is [2Fe-2S] cluster.

The enzyme catalyses terephthalate + NADH + O2 + H(+) = (3S,4R)-3,4-dihydroxycyclohexa-1,5-diene-1,4-dicarboxylate + NAD(+). Its function is as follows. Component of the terephthalate 1,2-dioxygenase multicomponent enzyme system which catalyzes the dioxygenation of terephthalate (TER/TPA) to 1,2-dihydroxy-3,5-cyclohexadiene-1,4-dicarboxylic acid (DCD). TphA1 probably reduces TphA2A3. It can also use 2,5-dicarboxypyridine (PDC) and 1,4-napthalenedicarboxylic acid (NDC) as substrates, and preferentially uses NADPH which is the physiological electron donor. This is Terephthalate 1,2-dioxygenase, reductase component 1 (tphA1I) from Comamonas sp.